The primary structure comprises 208 residues: Small ribosomal subunit protein uS5 (208 aa).

The tract at residues 1-38 (MPGRERRDGGRSADDNQKKNDRRGGRRDDRRNQQQDER) is disordered. An S5 DRBM domain is found at 41–104 (YIERVVTINR…EEARKNFFRV (64 aa)).

It belongs to the universal ribosomal protein uS5 family. Part of the 30S ribosomal subunit. Contacts proteins S4 and S8.

Functionally, with S4 and S12 plays an important role in translational accuracy. In terms of biological role, located at the back of the 30S subunit body where it stabilizes the conformation of the head with respect to the body. The sequence is that of Small ribosomal subunit protein uS5 from Corynebacterium diphtheriae (strain ATCC 700971 / NCTC 13129 / Biotype gravis).